We begin with the raw amino-acid sequence, 174 residues long: Phytochrome-interacting ankyrin-repeat protein 2 (174 aa).

The segment covering 1 to 13 has biased composition (low complexity); the sequence is MLQEPSAAFSLRR. The segment at 1-29 is disordered; sequence MLQEPSAAFSLRRNSFRRRSPRSNVDDRG. Residue S15 is modified to Phosphoserine. 3 ANK repeats span residues 28 to 57, 65 to 94, and 100 to 129; these read RGWNPLHIKARKGDLKSVKQLLDQGMDVNA, KGVSALHLAAEGGHIEVMDLLLERGANIDA, and CGWTPLHAAAKERKREAVKFLVENGAFLAD.

In terms of assembly, interacts with phytochrome A (PHYA), both in Pr and Pfr forms. Binds to PIF3, a repressor of photomorphogenesis in response to phytochrome-mediated light signaling; this interaction may trigger the repression of PHYA-mediated PIF3 phosphorylation. Interacts with SIGE/SIG5 in mitochondrion. Interacts with RPS9M (via C terminus). Phosphorylated by PHYA. Mostly expressed in flowers, cotyledons, leaves and siliques, and, to a lower extent, in roots and stems. Also detected at low levels in seedlings grown in continuous dark or light conditions. Expressed in male and female gametophytes.

It localises to the cytoplasm. It is found in the nucleus. The protein resides in the mitochondrion. Promotes anthocyanin accumulation through interaction with PHYA, especially in response to far-red light, high light and sucrose treatment, probably by triggering A3G2XYLT/UF3GT expression. Required for gametophytes development as well as male-female gamete recognition during fertilization, possibly by regulating mitochondrial gene expression. Represses PHYA-mediated PIF3 phosphorylation. The chain is Phytochrome-interacting ankyrin-repeat protein 2 from Arabidopsis thaliana (Mouse-ear cress).